We begin with the raw amino-acid sequence, 152 residues long: Protein NrdI (152 aa).

The protein belongs to the NrdI family.

In terms of biological role, probably involved in ribonucleotide reductase function. This Mycobacterium sp. (strain JLS) protein is Protein NrdI.